A 1242-amino-acid polypeptide reads, in one-letter code: DNA polymerase catalytic subunit (1242 aa).

3 disordered regions span residues 14-38, 644-665, and 1109-1162; these read GAVA…RPPQ, LQSA…SSSS, and APQG…RKPP. Low complexity predominate over residues 653 to 665; that stretch reads GVSPGSGSNSSSS. Residues 1111–1125 are compositionally biased toward polar residues; sequence QGSSDNGDSVTTGVV. Residues 1145-1155 are compositionally biased toward basic and acidic residues; that stretch reads ESNRRGGEPAK.

This sequence belongs to the DNA polymerase type-B family. Forms a complex with the ssDNA-binding protein UL57, the DNA polymerase processivity factor UL44, and the alkaline exonuclease UL98. Interacts with the putative helicase-primase complex composed of UL70, UL102 and UL105 proteins; these interactions may coordinate leading and lagging strand DNA synthesis at the replication fork.

It localises to the host nucleus. It catalyses the reaction DNA(n) + a 2'-deoxyribonucleoside 5'-triphosphate = DNA(n+1) + diphosphate. Functionally, replicates viral genomic DNA in the late phase of lytic infection, producing long concatemeric DNA. The replication complex is composed of six viral proteins: the DNA polymerase, processivity factor, primase, primase-associated factor, helicase, and ssDNA-binding protein. This Homo sapiens (Human) protein is DNA polymerase catalytic subunit (UL54).